Consider the following 163-residue polypeptide: Nucleotide-binding protein MT0592 (163 aa).

Belongs to the YajQ family.

Functionally, nucleotide-binding protein. The polypeptide is Nucleotide-binding protein MT0592 (Mycobacterium tuberculosis (strain CDC 1551 / Oshkosh)).